The primary structure comprises 159 residues: Endoribonuclease YbeY (159 aa).

Zn(2+) is bound by residues His122, His126, and His132.

Belongs to the endoribonuclease YbeY family. The cofactor is Zn(2+).

It localises to the cytoplasm. Its function is as follows. Single strand-specific metallo-endoribonuclease involved in late-stage 70S ribosome quality control and in maturation of the 3' terminus of the 16S rRNA. This is Endoribonuclease YbeY from Roseiflexus castenholzii (strain DSM 13941 / HLO8).